The primary structure comprises 241 residues: Chromosome partition protein MukE (241 aa).

The disordered stretch occupies residues Asp207–Glu241. Positions Glu227 to Glu241 are enriched in acidic residues.

It belongs to the MukE family. In terms of assembly, interacts, and probably forms a ternary complex, with MukF and MukB. The complex formation is stimulated by calcium or magnesium.

It localises to the cytoplasm. The protein localises to the nucleoid. Involved in chromosome condensation, segregation and cell cycle progression. May participate in facilitating chromosome segregation by condensation DNA from both sides of a centrally located replisome during cell division. Probably acts via its interaction with MukB and MukF. The sequence is that of Chromosome partition protein MukE from Mannheimia succiniciproducens (strain KCTC 0769BP / MBEL55E).